The sequence spans 137 residues: ATP synthase epsilon chain (137 aa).

Belongs to the ATPase epsilon chain family. F-type ATPases have 2 components, CF(1) - the catalytic core - and CF(0) - the membrane proton channel. CF(1) has five subunits: alpha(3), beta(3), gamma(1), delta(1), epsilon(1). CF(0) has three main subunits: a, b and c.

The protein resides in the cell membrane. Its function is as follows. Produces ATP from ADP in the presence of a proton gradient across the membrane. The chain is ATP synthase epsilon chain from Caldicellulosiruptor saccharolyticus (strain ATCC 43494 / DSM 8903 / Tp8T 6331).